Reading from the N-terminus, the 169-residue chain is Cell division inhibitor SulA (169 aa).

A ftsZ binding region spans residues 106 to 112 (ALRTGNY). Positions 162-169 (KIHSNLYH) are lon protease binding.

It belongs to the SulA family. As to quaternary structure, interacts with FtsZ. Is rapidly cleaved and degraded by the Lon protease once DNA damage is repaired.

Functionally, component of the SOS system and an inhibitor of cell division. Accumulation of SulA causes rapid cessation of cell division and the appearance of long, non-septate filaments. In the presence of GTP, binds a polymerization-competent form of FtsZ in a 1:1 ratio, thus inhibiting FtsZ polymerization and therefore preventing it from participating in the assembly of the Z ring. This mechanism prevents the premature segregation of damaged DNA to daughter cells during cell division. This is Cell division inhibitor SulA from Salmonella choleraesuis (strain SC-B67).